The following is a 418-amino-acid chain: Creatine kinase U-type, mitochondrial (418 aa).

The N-terminal 39 residues, 1–39 (MAGPFSRLLSARPGLKLLALAGAGSLAAGILLRPESVRA), are a transit peptide targeting the mitochondrion. Positions 40–64 (ATGERRRLYPPSAEYPDLRKHNNCM) are cardiolipin-binding. The Phosphagen kinase N-terminal domain maps to 46–132 (RLYPPSAEYP…FDPVIQERHN (87 aa)). Residue Ser-152 is modified to Phosphoserine. One can recognise a Phosphagen kinase C-terminal domain in the interval 159-401 (YVLSSRVRTG…NYLIDCERRL (243 aa)). 162-166 (SSRVR) contacts ATP. Position 197 is a phosphoserine (Ser-197). The residue at position 214 (Thr-214) is a Phosphothreonine. Position 225 (His-225) interacts with ATP. The residue at position 233 (Ser-233) is a Phosphoserine. Residues Arg-270, Arg-326, 354-359 (RGTGGV), and Asp-369 each bind ATP. Thr-356 bears the Phosphothreonine mark.

The protein belongs to the ATP:guanido phosphotransferase family. In terms of assembly, exists as an octamer composed of four MTCK homodimers. In terms of tissue distribution, in many tissues, with highest levels in brain gut and kidney. In the kidney localized primarily in the outer medulla in the thick ascending limb and distal convoluted tubule.

The protein resides in the mitochondrion inner membrane. The enzyme catalyses creatine + ATP = N-phosphocreatine + ADP + H(+). Its function is as follows. Reversibly catalyzes the transfer of phosphate between ATP and various phosphogens (e.g. creatine phosphate). Creatine kinase isoenzymes play a central role in energy transduction in tissues with large, fluctuating energy demands, such as skeletal muscle, heart, brain and spermatozoa. The polypeptide is Creatine kinase U-type, mitochondrial (Ckmt1) (Rattus norvegicus (Rat)).